We begin with the raw amino-acid sequence, 201 residues long: MSKRIAGPEIERLIQLLARVPGLGPRSARRAALHLIKKKEALLVPLGGAMQEAAEKVRICSCCGNVDTSDPCTICTDERRDPATLIVVEDVSDLWALERAGTMNVRYHVLGGRLSPLDGIGPDDLNIKGLVERVASGAIKEVILAVNATVEGQTTAHYITDQLSNFDVRVTRLAHGVPVGGELDYLDEGTLAAALRARTTL.

Residues 60-75 form a C4-type zinc finger; the sequence is CSCCGNVDTSDPCTIC. Residues 83–178 enclose the Toprim domain; that stretch reads ATLIVVEDVS…RVTRLAHGVP (96 aa).

This sequence belongs to the RecR family.

May play a role in DNA repair. It seems to be involved in an RecBC-independent recombinational process of DNA repair. It may act with RecF and RecO. This chain is Recombination protein RecR, found in Brucella abortus biovar 1 (strain 9-941).